A 509-amino-acid polypeptide reads, in one-letter code: Cytochrome P450 monooxygenase AFT11-1 (509 aa).

C432 contacts heme.

Belongs to the cytochrome P450 family. Requires heme as cofactor.

It participates in mycotoxin biosynthesis. Its function is as follows. Cytochrome P450 monooxygenase; part of the gene clusters that mediate the biosynthesis of the host-selective toxins (HSTs) AF-toxins responsible for Alternaria black spot of strawberry disease by the strawberry pathotype. AF-toxin I and III are valine derivatives of 2,3-dyhydroxy-isovaleric acid and 2-hydroxy-isovaleric acid respectively, while AF II is an isoleucine derivative of 2-hydroxy-valeric acid. These derivatives are bound to a 9,10-epoxy-8-hydroxy-9-methyl-decatrienoic acid (EDA) moiety. On cellular level, AF-toxins affect plasma membrane of susceptible cells and cause a sudden increase in loss of K(+) after a few minutes of toxin treatment. The aldo-keto reductase AFTS1 catalyzes the conversion of 2-keto-isovaleric acid (2-KIV) to 2-hydroxy-isovaleric acid (2-HIV) by reduction of its ketone to an alcohol. The acyl-CoA ligase AFT1, the hydrolase AFT2 and the enoyl-CoA hydratases AFT3 and AFT6, but also the polyketide synthase AFT9, the acyl-CoA dehydrogenase AFT10, the cytochrome P450 monooxygenase AFT11 and the oxidoreductase AFT12 are all involved in the biosynthesis of the AK-, AF- and ACT-toxin common EDA structural moiety. The exact function of each enzyme, and of additional enzymes identified within the AF-toxin clusters have still to be determined. The chain is Cytochrome P450 monooxygenase AFT11-1 from Alternaria alternata (Alternaria rot fungus).